The primary structure comprises 387 residues: MATTKSFLILIVMILATTSSTFASLEEMVTVLSIDGGGIKGIIPGTILEFLEGQLQKMDNNADARLADYFDVIGGTSTGGLLTSMITTPNENNRPFAAANEIVPFFFEHGPHIFNSSTGQFFGPKYDGKYLMQVLQENLGETRVHQALTEVAISSFDIKTNKPVIFTKSNLAKSPELDAKMYDICYSTAAAPTYFPPHYFTTNTINGDKYEFNLVDGAVATVADPALLSISVATRLAEKDPAFASIRSLNYKKMLLLSLGTGTTSEFDKTYTAEETAKWGAIQWMLVIQRMTDAASSYMTDYYLSTVFQAQNSQKNYLRVQENALTGTTTEMDDASEANMESLVQVGENLLKKPVSKDNPETYEEALKRFAKLLSDRKKLRANKASY.

The N-terminal stretch at 1 to 23 (MATTKSFLILIVMILATTSSTFA) is a signal peptide. A PNPLA domain is found at 32–230 (LSIDGGGIKG…TVADPALLSI (199 aa)). A GXGXXG motif is present at residues 36 to 41 (GGGIKG). Residues 75–79 (GTSTG) carry the GXSXG motif. The active-site Nucleophile is S77. N-linked (GlcNAc...) asparagine glycosylation occurs at N115. D216 acts as the Proton acceptor in catalysis. A DGA/G motif is present at residues 216-218 (DGA). Residues 361 to 385 (ETYEEALKRFAKLLSDRKKLRANKA) are a coiled coil.

It belongs to the patatin family. As to expression, tuber.

Its subcellular location is the vacuole. Probable lipolytic acyl hydrolase (LAH), an activity which is thought to be involved in the response of tubers to pathogens. The sequence is that of Patatin-08 from Solanum tuberosum (Potato).